A 336-amino-acid polypeptide reads, in one-letter code: MSRVTLSRYLIEQTRSNNTPADLRFLIEVVARACKAISHQVSKGALGGVLGSAGSENVQGEVQKKLDVLSNEILLEANEWGGHLAGMASEEMDNAYQIPGKYPKGAYLLVFDPLDGSSNIDVNVSVGTIFSVLRCPDACFSQNDALGEEAFLQPGTKQVAAGYAIYGPQTMLVLTLGHGVMGFTLDRELGSFVLTHENLCVPQSTAEFAINMSNQRHWEAPVQRYVGELLAGKEGPLGKNYNMRWIASMVADVHRILTRGGIFMYPRDAREPDKAGKLRLMYEANPMSMIIEQAGGAATTGTQRILEIQPQSLHQRVPVFLGSKEEVERVTGYHQG.

Residues Glu90, Asp112, Leu114, and Asp115 each coordinate Mg(2+). Substrate-binding positions include 115–118 (DGSS), Asn211, and Lys277. Glu283 is a binding site for Mg(2+).

It belongs to the FBPase class 1 family. In terms of assembly, homotetramer. Mg(2+) serves as cofactor.

Its subcellular location is the cytoplasm. It catalyses the reaction beta-D-fructose 1,6-bisphosphate + H2O = beta-D-fructose 6-phosphate + phosphate. It participates in carbohydrate biosynthesis; gluconeogenesis. The protein is Fructose-1,6-bisphosphatase class 1 of Stutzerimonas stutzeri (strain A1501) (Pseudomonas stutzeri).